Here is a 217-residue protein sequence, read N- to C-terminus: ATP-dependent Clp protease proteolytic subunit (217 aa).

Residue S119 is the Nucleophile of the active site. The active site involves H144.

Belongs to the peptidase S14 family. As to quaternary structure, fourteen ClpP subunits assemble into 2 heptameric rings which stack back to back to give a disk-like structure with a central cavity, resembling the structure of eukaryotic proteasomes.

The protein localises to the cytoplasm. It carries out the reaction Hydrolysis of proteins to small peptides in the presence of ATP and magnesium. alpha-casein is the usual test substrate. In the absence of ATP, only oligopeptides shorter than five residues are hydrolyzed (such as succinyl-Leu-Tyr-|-NHMec, and Leu-Tyr-Leu-|-Tyr-Trp, in which cleavage of the -Tyr-|-Leu- and -Tyr-|-Trp bonds also occurs).. Its function is as follows. Cleaves peptides in various proteins in a process that requires ATP hydrolysis. Has a chymotrypsin-like activity. Plays a major role in the degradation of misfolded proteins. The chain is ATP-dependent Clp protease proteolytic subunit from Bordetella bronchiseptica (strain ATCC BAA-588 / NCTC 13252 / RB50) (Alcaligenes bronchisepticus).